The chain runs to 67 residues: Sec-independent protein translocase protein TatA (67 aa).

A helical transmembrane segment spans residues 1 to 21 (MFGIGIQELLVVLVLVLLVFG). The disordered stretch occupies residues 46 to 67 (PDEIDITPGKKNGKTDKDDKQA). A compositionally biased stretch (basic and acidic residues) spans 58 to 67 (GKTDKDDKQA).

This sequence belongs to the TatA/E family. As to quaternary structure, the Tat system comprises two distinct complexes: a TatABC complex, containing multiple copies of TatA, TatB and TatC subunits, and a separate TatA complex, containing only TatA subunits. Substrates initially bind to the TatABC complex, which probably triggers association of the separate TatA complex to form the active translocon.

It localises to the cell inner membrane. In terms of biological role, part of the twin-arginine translocation (Tat) system that transports large folded proteins containing a characteristic twin-arginine motif in their signal peptide across membranes. TatA could form the protein-conducting channel of the Tat system. The sequence is that of Sec-independent protein translocase protein TatA from Nitratidesulfovibrio vulgaris (strain DSM 19637 / Miyazaki F) (Desulfovibrio vulgaris).